Consider the following 363-residue polypeptide: Cinnamyl alcohol dehydrogenase 2 (363 aa).

Zn(2+) is bound at residue cysteine 47. An NADP(+)-binding site is contributed by threonine 49. Residues histidine 69, glutamate 70, cysteine 100, cysteine 103, cysteine 106, cysteine 114, and cysteine 163 each contribute to the Zn(2+) site. NADP(+) is bound by residues threonine 167, 188–193 (GLGGVG), 211–216 (SSSARK), threonine 251, glycine 275, and 298–300 (SFI).

The protein belongs to the zinc-containing alcohol dehydrogenase family. Homodimer. Zn(2+) serves as cofactor. Expressed in roots behind the root tips in the pericycle region and layer of cortical cells adjacent to the exodermis. Expressed in vascular bundles and lateral veins of leaf sheaths and blades. Expressed in the vicinity of vascular bundles in the first internode below the inflorescence. Highly expressed in the culm.

It carries out the reaction (E)-cinnamyl alcohol + NADP(+) = (E)-cinnamaldehyde + NADPH + H(+). The catalysed reaction is (E)-coniferol + NADP(+) = (E)-coniferaldehyde + NADPH + H(+). It catalyses the reaction (E)-sinapyl alcohol + NADP(+) = (E)-sinapaldehyde + NADPH + H(+). The enzyme catalyses (E)-4-coumaroyl alcohol + NADP(+) = (E)-4-coumaraldehyde + NADPH + H(+). It carries out the reaction (E)-caffeyl alcohol + NADP(+) = (E)-caffeyl aldehyde + NADPH + H(+). The protein operates within aromatic compound metabolism; phenylpropanoid biosynthesis. In terms of biological role, involved in lignin biosynthesis. Catalyzes the final step specific for the production of lignin monomers. Catalyzes the NADPH-dependent reduction of coniferaldehyde and sinapaldehyde to their respective alcohols. Plays the major role in monolignol biosynthesis. Functions cooperatively with COMT in the culm internodes for the biosynthesis of monolignols, the lignin precursors. May be involved in lignin biosynthesis in leaves and roots. The polypeptide is Cinnamyl alcohol dehydrogenase 2 (Oryza sativa subsp. japonica (Rice)).